Here is a 425-residue protein sequence, read N- to C-terminus: NAC transcription factor ONAC010 (425 aa).

Over residues 1–10 (MESPDSSSGS) the composition is skewed to polar residues. The disordered stretch occupies residues 1 to 34 (MESPDSSSGSAPPRVLRRQQQQPGSAPELPPGFR). Low complexity predominate over residues 12-23 (PPRVLRRQQQQP). One can recognise an NAC domain in the interval 29 to 200 (LPPGFRFHPT…DWVLCRIYKK (172 aa)). A DNA-binding region spans residues 129–206 (VGVKKALVFY…IYKKTNKAGA (78 aa)).

It localises to the nucleus. Its function is as follows. Transcription factor of the NAC family associated with male fertility. The polypeptide is NAC transcription factor ONAC010 (ONAC010) (Oryza sativa subsp. indica (Rice)).